A 126-amino-acid polypeptide reads, in one-letter code: Probable prefoldin subunit 4 (126 aa).

Belongs to the prefoldin subunit beta family. In terms of assembly, heterohexamer of two PFD-alpha type and four PFD-beta type subunits.

In terms of biological role, binds specifically to cytosolic chaperonin (c-CPN) and transfers target proteins to it. Binds to nascent polypeptide chain and promotes folding in an environment in which there are many competing pathways for nonnative proteins. Appears to play a non-essential role. The sequence is that of Probable prefoldin subunit 4 from Caenorhabditis briggsae.